Here is an 864-residue protein sequence, read N- to C-terminus: Mitochondrial 15S rRNA processing factor CCM1 (864 aa).

A mitochondrion-targeting transit peptide spans 1-76; that stretch reads MYMARCGPKN…REFSNTLKER (76 aa). 2 PPR repeats span residues 319 to 353 and 356 to 390; these read NKQNLTTVIQFYSRKEMTKQAWNTFDTMKFLSTKH and DICTYNTMLRICEKERNFPKALDLFQEIQDHNIKP.

Belongs to the CCM1 family. As to quaternary structure, binds to mitochondrial small subunit 15S rRNA.

The protein resides in the mitochondrion. Its function is as follows. Regulates mitochondrial small subunit maturation by controlling 15S rRNA 5'-end processing. Localizes to the 5' precursor of the 15S rRNA in a position that is subsequently occupied by mS47 in the mature yeast mtSSU. Uses structure and sequence-specific RNA recognition, binding to a single-stranded region of the precursor and specifically recognizing bases -6 to -1. The exchange of Ccm1 for mS47 is coupled to the irreversible removal of precursor rRNA that is accompanied by conformational changes of the mitoribosomal proteins uS5m and mS26. These conformational changes signal completion of 5'-end rRNA processing through protection of the mature 5'-end of the 15S rRNA and stabilization of mS47. The removal of the 5' precursor together with the dissociation of Ccm1 may be catalyzed by the 5'-3' exoribonuclease Pet127. Involved in the specific removal of group I introns in mitochondrial encoded transcripts. The polypeptide is Mitochondrial 15S rRNA processing factor CCM1 (CCM1) (Saccharomyces cerevisiae (strain JAY291) (Baker's yeast)).